Consider the following 991-residue polypeptide: Collagenase ColT (991 aa).

The signal sequence occupies residues 1-28 (MKKKFIKMLCSIAIGCMISTSYSIKVSA). Residues 29–52 (FSNGNTKTNPNGEFKSLSLNSTNP) constitute a propeptide that is removed on maturation. Residues 53-727 (YKTKYSFNDL…VYDIVFHGLL (675 aa)) are S1 metalloprotease domain, degrades FALGPA (furylacryloyl-Leu-Gly-Pro-Ala). Residues 57–330 (YSFNDLNKLS…AIEAIKEDFN (274 aa)) are activator domain. The interval 340–611 (DINKLIEEGK…MENLVNNYDN (272 aa)) is catalytic subdomain. E440 lines the Ca(2+) pocket. Zn(2+) is bound at residue H465. E466 is a catalytic residue. A Zn(2+)-binding site is contributed by H469. Ca(2+) contacts are provided by G473, I477, and G479. E499 serves as a coordination point for Zn(2+). The segment at 619–731 (DDYMKQYDNK…VFHGLLSHNK (113 aa)) is helper subdomain. Collagen-binding domain regions lie at residues 755 to 870 (IYEK…NISD) and 878 to 991 (IKKI…VIIN). Ca(2+)-binding residues include E757, E759, N761, D784, D787, E883, E885, N887, D888, D910, and D913.

Belongs to the peptidase M9B family. Collagenase subfamily. Ca(2+) is required as a cofactor. Zn(2+) serves as cofactor.

It localises to the secreted. It catalyses the reaction Digestion of native collagen in the triple helical region at Xaa-|-Gly bonds. With synthetic peptides, a preference is shown for Gly at P3 and P1', Pro and Ala at P2 and P2', and hydroxyproline, Ala or Arg at P3'.. Partially inhibited by 1-10-phenanthroline; inactivation is irreversible. Partially inhibited by EDTA; inactivation is reversible. Inhibited by broad-spectrum zinc metalloprotease inhibitor batimastat. N-aryl mercaptoacetamide-based inhibitors have been isolated that act on clostridial collagenases with submicromolar affinity while having negligibile activity on human collagenases. Its function is as follows. Clostridial collagenases are among the most efficient degraders of eukaryotic collagen known; saprophytes use collagen as a carbon source while pathogens additionally digest collagen to aid in host colonization. Has both tripeptidylcarboxypeptidase on Gly-X-Y and endopeptidase activities; the endopeptidase cuts within the triple helix region of collagen while tripeptidylcarboxypeptidase successively digests the exposed ends, thus clostridial collagenases can digest large sections of collagen. The activator domain (residues 57-330) and catalytic subdomain (340-611) open and close around substrate allowing digestion when the protein is closed. This chain is Collagenase ColT, found in Clostridium tetani (strain Massachusetts / E88).